The sequence spans 642 residues: Threonine--tRNA ligase (642 aa).

The 58-residue stretch at 1 to 58 (MQVAGKELEVQQGALCGEVLKEALSKKQFKNVVVAKCGDTLLDLTTTVPADCTDLEPV) folds into the TGS domain. The interval 239 to 530 (DHRKLGTQLD…LLEHTGGALP (292 aa)) is catalytic. 3 residues coordinate Zn(2+): Cys-331, His-382, and His-507.

Belongs to the class-II aminoacyl-tRNA synthetase family. As to quaternary structure, homodimer. Zn(2+) serves as cofactor.

Its subcellular location is the cytoplasm. It carries out the reaction tRNA(Thr) + L-threonine + ATP = L-threonyl-tRNA(Thr) + AMP + diphosphate + H(+). In terms of biological role, catalyzes the attachment of threonine to tRNA(Thr) in a two-step reaction: L-threonine is first activated by ATP to form Thr-AMP and then transferred to the acceptor end of tRNA(Thr). Also edits incorrectly charged L-seryl-tRNA(Thr). This Maridesulfovibrio salexigens (strain ATCC 14822 / DSM 2638 / NCIMB 8403 / VKM B-1763) (Desulfovibrio salexigens) protein is Threonine--tRNA ligase.